The chain runs to 401 residues: Nodulation protein E (401 aa).

A Ketosynthase family 3 (KS3) domain is found at 2–400; that stretch reads DRRVVITGMG…GTNAVLAFKQ (399 aa). Active-site for beta-ketoacyl synthase activity residues include cysteine 161, histidine 293, and histidine 330. A helical transmembrane segment spans residues 328–347; sequence HAHCIGAASALEMIACVMAI.

The protein belongs to the thiolase-like superfamily. Beta-ketoacyl-ACP synthases family.

Its subcellular location is the cell inner membrane. Its function is as follows. Proposed to synthesize NOD factor fatty acyl chain. Involved in the synthesis of a highly unsaturated fatty acid moiety, which forms part of a lipo-oligosaccharide that is responsible for host specificity. The protein is Nodulation protein E (nodE) of Rhizobium meliloti (Ensifer meliloti).